The sequence spans 159 residues: Transcription antitermination protein NusB (159 aa).

This sequence belongs to the NusB family.

Its function is as follows. Involved in transcription antitermination. Required for transcription of ribosomal RNA (rRNA) genes. Binds specifically to the boxA antiterminator sequence of the ribosomal RNA (rrn) operons. The sequence is that of Transcription antitermination protein NusB from Xanthomonas campestris pv. campestris (strain 8004).